A 236-amino-acid chain; its full sequence is Biosynthetic peptidoglycan transglycosylase (236 aa).

A helical transmembrane segment spans residues Gly20–Pro40.

It belongs to the glycosyltransferase 51 family.

The protein resides in the cell inner membrane. It catalyses the reaction [GlcNAc-(1-&gt;4)-Mur2Ac(oyl-L-Ala-gamma-D-Glu-L-Lys-D-Ala-D-Ala)](n)-di-trans,octa-cis-undecaprenyl diphosphate + beta-D-GlcNAc-(1-&gt;4)-Mur2Ac(oyl-L-Ala-gamma-D-Glu-L-Lys-D-Ala-D-Ala)-di-trans,octa-cis-undecaprenyl diphosphate = [GlcNAc-(1-&gt;4)-Mur2Ac(oyl-L-Ala-gamma-D-Glu-L-Lys-D-Ala-D-Ala)](n+1)-di-trans,octa-cis-undecaprenyl diphosphate + di-trans,octa-cis-undecaprenyl diphosphate + H(+). The protein operates within cell wall biogenesis; peptidoglycan biosynthesis. Its function is as follows. Peptidoglycan polymerase that catalyzes glycan chain elongation from lipid-linked precursors. This chain is Biosynthetic peptidoglycan transglycosylase, found in Mesorhizobium japonicum (strain LMG 29417 / CECT 9101 / MAFF 303099) (Mesorhizobium loti (strain MAFF 303099)).